A 210-amino-acid chain; its full sequence is MECRERRLAADLIALSSVEGLPVSEAAKRLCMTRQGLYKLLKQLRAEGYVAEGSVVKLTPKGRDFLSGILRDLLRYFNIASIRLVGRVVSGLGEGAFYISLEGYKRAIEERLGFTPFPGTLNIKLDPQYMPYRRYLDGLPGVVIPGFSNGLRTYGAVKAFRARVNGVEGAVVMPERTHHPTDVIEVVAPVKLRDALGLRDGDVVEVEVLL.

The segment at 1-81 (MECRERRLAA…DLLRYFNIAS (81 aa)) is H-T-H motif-like. A riboflavin kinase region spans residues 82 to 210 (IRLVGRVVSG…GDVVEVEVLL (129 aa)). 91–96 (GLGEGA) contacts CDP. Mg(2+) contacts are provided by Thr120 and Asn122. 2 residues coordinate FMN: Thr177 and Glu185. 190–193 (VKLR) is a binding site for CDP.

Belongs to the archaeal riboflavin kinase family. Requires Mg(2+) as cofactor.

It carries out the reaction riboflavin + CTP = CDP + FMN + H(+). It functions in the pathway cofactor biosynthesis; FMN biosynthesis; FMN from riboflavin (CTP route): step 1/1. Its function is as follows. Catalyzes the CTP-dependent phosphorylation of riboflavin (vitamin B2) to form flavin mononucleotide (FMN). The polypeptide is Riboflavin kinase (ribK) (Pyrobaculum arsenaticum (strain DSM 13514 / JCM 11321 / PZ6)).